Consider the following 401-residue polypeptide: Nodulation protein E (401 aa).

The region spanning 2–400 (DRRVVITGMG…GTNAVLAFKQ (399 aa)) is the Ketosynthase family 3 (KS3) domain. Active-site for beta-ketoacyl synthase activity residues include Cys161, His293, and His330. Residues 328–347 (HAHCIGAASALEMIACVMAI) traverse the membrane as a helical segment.

The protein belongs to the thiolase-like superfamily. Beta-ketoacyl-ACP synthases family.

It is found in the cell inner membrane. In terms of biological role, proposed to synthesize NOD factor fatty acyl chain. Involved in the synthesis of a highly unsaturated fatty acid moiety, which forms part of a lipo-oligosaccharide that is responsible for host specificity. The protein is Nodulation protein E (nodE) of Rhizobium meliloti (Ensifer meliloti).